Consider the following 491-residue polypeptide: GTPase Der (491 aa).

Positions 3–166 constitute an EngA-type G 1 domain; it reads PVIALVGRPN…AALGIFPRDD (164 aa). Residues 9–16, 56–60, and 118–121 contribute to the GTP site; these read GRPNVGKS, DTGGI, and NKVD. The disordered stretch occupies residues 164-191; the sequence is RDDEGEEGEGEAEVVAEGEEPKRVPGPS. Positions 166–181 are enriched in acidic residues; sequence DEGEEGEGEAEVVAEG. Basic and acidic residues predominate over residues 182 to 191; sequence EEPKRVPGPS. The EngA-type G 2 domain maps to 196–369; the sequence is IKIAIIGRPN…SVQAAFQSAV (174 aa). GTP-binding positions include 202–209, 249–253, and 314–317; these read GRPNVGKS, DTAGV, and NKWD. Residues 370–454 form the KH-like domain; the sequence is TRWPTSRLTR…PIRIEYKGGD (85 aa). Basic and acidic residues predominate over residues 452–464; that stretch reads GGDNPYEGKKNSL. The segment at 452–491 is disordered; the sequence is GGDNPYEGKKNSLTERQVNKKRRLMSHHKKAEKKRRDKKR. The segment covering 470–491 has biased composition (basic residues); it reads NKKRRLMSHHKKAEKKRRDKKR.

The protein belongs to the TRAFAC class TrmE-Era-EngA-EngB-Septin-like GTPase superfamily. EngA (Der) GTPase family. Associates with the 50S ribosomal subunit.

Its function is as follows. GTPase that plays an essential role in the late steps of ribosome biogenesis. The protein is GTPase Der of Azotobacter vinelandii (strain DJ / ATCC BAA-1303).